The primary structure comprises 120 residues: Small ribosomal subunit protein bS6 (120 aa).

Over residues 97–112 (SNEPSPILKNQSTENT) the composition is skewed to polar residues. Residues 97-120 (SNEPSPILKNQSTENTPVIDVTAN) are disordered.

The protein belongs to the bacterial ribosomal protein bS6 family.

Binds together with bS18 to 16S ribosomal RNA. The sequence is that of Small ribosomal subunit protein bS6 from Rickettsia bellii (strain RML369-C).